The chain runs to 281 residues: Very long chain fatty acid elongase 7 (281 aa).

Alanine 2 carries the N-acetylalanine modification. Residues 2–27 (AFSDLTSRTVRFYDNWIKDADPRVED) are Lumenal-facing. The chain crosses the membrane as a helical span at residues 28–48 (YLLMSSPLPQTIILGLYVYFV). Residues 49-72 (TSLGPKLMENRKPFELKKAMITYN) are Cytoplasmic-facing. A helical membrane pass occupies residues 73–93 (FFIVLFSVYMCYEFVMSGWGT). Over 94 to 115 (GYSFRCDIVDYSQSPRAMRMVH) the chain is Lumenal. Residues cysteine 99 and cysteine 231 are joined by a disulfide bond. Residues 116 to 136 (TCWLYYFSKFIELLDTIFFVL) traverse the membrane as a helical segment. Residues lysine 124, arginine 137, lysine 139, glutamine 142, and histidine 147 each contribute to the 3-oxoeicosanoyl-CoA site. The Cytoplasmic segment spans residues 137–142 (RKKNSQ). The helical transmembrane segment at 143 to 162 (VTFLHVFHHTIMPWTWWFGV) threads the bilayer. Positions 147 to 151 (HVFHH) match the HxxHH motif motif. The active-site Nucleophile is the histidine 150. Topologically, residues 163 to 171 (KFAAGGLGT) are lumenal. The chain crosses the membrane as a helical span at residues 172 to 194 (FHAFLNTAVHVVMYSYYGLCAMG). 3-oxoeicosanoyl-CoA contacts are provided by tyrosine 187, lysine 204, threonine 208, and glutamine 211. At 195–206 (PAYQKYLWWKKH) the chain is on the cytoplasmic side. Residues 207 to 227 (LTSLQLVQFVLVTIHIGQIFF) traverse the membrane as a helical segment. At 228–236 (MEDCNYQYP) the chain is on the lumenal side. A helical membrane pass occupies residues 237 to 257 (VFLYIIMSYGCIFLLLFLHFW). The Cytoplasmic portion of the chain corresponds to 258–281 (YRAYTKGQRLPKTLENGNCKSKRH). Arginine 266 serves as a coordination point for 3-oxoeicosanoyl-CoA. Residues 277–281 (KSKRH) carry the Di-lysine motif motif.

Belongs to the ELO family. ELOVL7 subfamily. As to quaternary structure, homodimer. Interacts with TECR.

The protein localises to the endoplasmic reticulum membrane. It carries out the reaction a very-long-chain acyl-CoA + malonyl-CoA + H(+) = a very-long-chain 3-oxoacyl-CoA + CO2 + CoA. The catalysed reaction is eicosanoyl-CoA + malonyl-CoA + H(+) = 3-oxodocosanoyl-CoA + CO2 + CoA. The enzyme catalyses (5Z,8Z,11Z,14Z)-eicosatetraenoyl-CoA + malonyl-CoA + H(+) = (7Z,10Z,13Z,16Z)-3-oxodocosatetraenoyl-CoA + CO2 + CoA. It catalyses the reaction (6Z,9Z,12Z)-octadecatrienoyl-CoA + malonyl-CoA + H(+) = (8Z,11Z,14Z)-3-oxoeicosatrienoyl-CoA + CO2 + CoA. It carries out the reaction (9Z,12Z)-octadecadienoyl-CoA + malonyl-CoA + H(+) = (11Z,14Z)-3-oxoicosa-11,14-dienoyl-CoA + CO2 + CoA. The catalysed reaction is (9Z)-octadecenoyl-CoA + malonyl-CoA + H(+) = 3-oxo-(11Z)-eicosenoyl-CoA + CO2 + CoA. The enzyme catalyses octadecanoyl-CoA + malonyl-CoA + H(+) = 3-oxoeicosanoyl-CoA + CO2 + CoA. It catalyses the reaction hexadecanoyl-CoA + malonyl-CoA + H(+) = 3-oxooctadecanoyl-CoA + CO2 + CoA. It carries out the reaction (9Z,12Z,15Z)-octadecatrienoyl-CoA + malonyl-CoA + H(+) = (11Z,14Z,17Z)-3-oxoeicosatrienoyl-CoA + CO2 + CoA. The protein operates within lipid metabolism; fatty acid biosynthesis. Functionally, catalyzes the first and rate-limiting reaction of the four reactions that constitute the long-chain fatty acids elongation cycle. This endoplasmic reticulum-bound enzymatic process allows the addition of 2 carbons to the chain of long- and very long-chain fatty acids (VLCFAs) per cycle. Condensing enzyme with higher activity toward C18 acyl-CoAs, especially C18:3(n-3) acyl-CoAs and C18:3(n-6)-CoAs. Also active toward C20:4-, C18:0-, C18:1-, C18:2- and C16:0-CoAs, and weakly toward C20:0-CoA. Little or no activity toward C22:0-, C24:0-, or C26:0-CoAs. May participate in the production of saturated and polyunsaturated VLCFAs of different chain lengths that are involved in multiple biological processes as precursors of membrane lipids and lipid mediators. This is Very long chain fatty acid elongase 7 from Mus musculus (Mouse).